The chain runs to 239 residues: Large ribosomal subunit protein uL2 (239 aa).

2 disordered regions span residues 1 to 20 and 202 to 239; these read MGHR…YRAP and FGGG…RRKR.

This sequence belongs to the universal ribosomal protein uL2 family. As to quaternary structure, part of the 50S ribosomal subunit. Forms a bridge to the 30S subunit in the 70S ribosome.

One of the primary rRNA binding proteins. Required for association of the 30S and 50S subunits to form the 70S ribosome, for tRNA binding and peptide bond formation. It has been suggested to have peptidyltransferase activity; this is somewhat controversial. Makes several contacts with the 16S rRNA in the 70S ribosome. The chain is Large ribosomal subunit protein uL2 from Methanosphaerula palustris (strain ATCC BAA-1556 / DSM 19958 / E1-9c).